The primary structure comprises 102 residues: Large ribosomal subunit protein bL21 (102 aa).

Belongs to the bacterial ribosomal protein bL21 family. Part of the 50S ribosomal subunit. Contacts protein L20.

Functionally, this protein binds to 23S rRNA in the presence of protein L20. The protein is Large ribosomal subunit protein bL21 of Lactiplantibacillus plantarum (strain ATCC BAA-793 / NCIMB 8826 / WCFS1) (Lactobacillus plantarum).